Here is a 365-residue protein sequence, read N- to C-terminus: Chorismate synthase (365 aa).

Basic and acidic residues predominate over residues 41 to 51; it reads IQKELDRRRPG. Residues 41 to 62 are disordered; that stretch reads IQKELDRRRPGQSEVSTPRSEA. Position 48 (arginine 48) interacts with NADP(+). Residues 125-127, glycine 285, 300-304, and arginine 327 contribute to the FMN site; these read RSS and KPTPS.

Belongs to the chorismate synthase family. It depends on FMNH2 as a cofactor.

The enzyme catalyses 5-O-(1-carboxyvinyl)-3-phosphoshikimate = chorismate + phosphate. Its pathway is metabolic intermediate biosynthesis; chorismate biosynthesis; chorismate from D-erythrose 4-phosphate and phosphoenolpyruvate: step 7/7. In terms of biological role, catalyzes the anti-1,4-elimination of the C-3 phosphate and the C-6 proR hydrogen from 5-enolpyruvylshikimate-3-phosphate (EPSP) to yield chorismate, which is the branch point compound that serves as the starting substrate for the three terminal pathways of aromatic amino acid biosynthesis. This reaction introduces a second double bond into the aromatic ring system. The chain is Chorismate synthase from Methanosarcina acetivorans (strain ATCC 35395 / DSM 2834 / JCM 12185 / C2A).